The chain runs to 1231 residues: MSFLPGEPVPPGFEEDVSRTAVIQKQIESYTAGPLIGTEYTIELHEPAQLRPNYFCVLCQTCSDGRNVFVHWTSQAHRTKYLQTHFQKAYKELQKLKRTPNSSGDLVTATGNLVKCIEKHFGRSRNLITATGDDFRRYRSKMCSQVRDSFHFDECAGSDFSEEAQRVIRELKPDESIKSSMKKNVDGTGDSNKQHDDGNIIALDAISSDDESFGGSTASVVPVPKGRQKNNLSEDAGGRSKNQSPPPAGGVNKTQHLPTPKELAIQASKISQERYKWEKFRCMLEIQLKQLRSDTEMYESNPEKHPDYPDEWKQFWNRRYKQLQEEKKCDPNQYDYKPEWISYWKDRRIVLFDIAVNKIKKDLKEKFKLGDEDEEKTLELMERYKIRVASPRRAPATTNSDNCRKTKPNFRNNRPIVATSKLPDAVIDISDDDVDSPPSRSRHSHKRRSISRSLSPKRGGRRAVRRSRSRSPRRSYNRGSTRSRSRSMRHRSRSPAHYRGRGRGREPASKERGSSSRDFGGRHSLQRERERSSEYYHRNEGYARSSRGYESVETFRVLDSRVYPEYKVTKTSSISPTASSNKEKEKEASEPIEEGPLTVVSVLRMLSAVEEHLGSLGPKALNLLSKALAMELVKPNAAEDLLRNEDNCVFLETTKEKLKGILIAEVLDDPQKVRVIKKLITNIAEIIYQATFKGTNDAVDVKVKANANPAPIQLPFDRNLVAPKLANALVLNGYNNVSTGDMNNLLHMLTLLMKTDKQRRQLDNNNGLKFEEIKVKLGLQNNPSPDDMGIDLDELMKEVEHQLHKESVDIVNKPTGAPAKVQAADTVGGSTGLESLTDSDLQTLLQNFKFLSNEEQVHLIGHLRKLEVQDPSRVDRLRKYVNLVELRGDGESCSDFLARVVKIGGASKAKPATKFKASVMGGRTSSAMAASSASATAPKVGHSMLSAQRPNLDRDMSSMPINKQRRGRNTPSIMLDDDDEEDDDYNFDDLVMKACDSNGSASAGGGGGVVGAGVHNKPGVPPIIGVESSPNALTFKPAAATKISLKDTENIIANLMGTLSKNGTSGGSPVGGNRNYMMNQQHGAPNAQNAPNLGQNPGQNLGQKQPGAGYSNAGYPGQQQQQQQQQQHGRNFGQEAQPLMSGLSGGPNANHYPNQQGYGGYHPFAGNGVQQNYGGMVPPGPGGYVGPPPNPWASNVPPQPPFNQMPQNFMGAQQQQQQQQPHFNNMFGGRH.

Disordered regions lie at residues 171–197 (LKPD…QHDD), 210–259 (DESF…HLPT), and 389–547 (ASPR…RSSR). The segment covering 440 to 450 (RSRHSHKRRSI) has biased composition (basic residues). A phosphoserine mark is found at S449, S451, S453, and S455. The span at 458 to 502 (RGGRRAVRRSRSRSPRRSYNRGSTRSRSRSMRHRSRSPAHYRGRG) shows a compositional bias: basic residues. The segment covering 503 to 541 (RGREPASKERGSSSRDFGGRHSLQRERERSSEYYHRNEG) has biased composition (basic and acidic residues). A Phosphotyrosine modification is found at Y549. Disordered regions lie at residues 570-591 (KTSS…ASEP), 950-981 (PNLD…DDEE), and 1058-1203 (TLSK…PPFN). Phosphoserine is present on residues S573 and S589. T970 carries the phosphothreonine modification. Phosphoserine is present on S972. Positions 1076-1103 (YMMNQQHGAPNAQNAPNLGQNPGQNLGQ) are enriched in polar residues. The segment covering 1118–1127 (QQQQQQQQQQ) has biased composition (low complexity). Positions 1178–1203 (PPGPGGYVGPPPNPWASNVPPQPPFN) are enriched in pro residues.

This is an uncharacterized protein from Drosophila melanogaster (Fruit fly).